The following is a 1283-amino-acid chain: Rab11 family-interacting protein 1 (1283 aa).

One can recognise a C2 domain in the interval 1 to 126 (MSLMVSAGRG…DQGRRKTQWY (126 aa)). Residues 161 to 185 (SMKDKSRNPFGKLKDKIKGKNKDSG) are compositionally biased toward basic and acidic residues. Residues 161–281 (SMKDKSRNPF…VMSHKRTAST (121 aa)) are disordered. Residues serine 184, serine 202, serine 206, and serine 234 each carry the phosphoserine modification. Polar residues predominate over residues 225–239 (NLQKTPLSQSMSVLP). Acidic residues predominate over residues 257–266 (WDEDDNEDES). Serine 300, serine 315, serine 339, serine 341, serine 343, serine 345, serine 356, serine 357, and serine 382 each carry phosphoserine. Disordered regions lie at residues 330 to 727 (EAKG…QEVP), 741 to 782 (VGEL…ASVP), 835 to 913 (PQEL…LFRM), 969 to 993 (DERIDQVEDDGDQVEDDGETAKSST), and 1037 to 1141 (ASVT…RVEN). Over residues 419–433 (ATKEAKESKKPESRR) the composition is skewed to basic and acidic residues. Serine 435 carries the post-translational modification Phosphoserine. Residues 442–451 (GKKDVAKGSE) are compositionally biased toward basic and acidic residues. The residue at position 477 (serine 477) is a Phosphoserine. The span at 482-491 (DLVRRSEKDT) shows a compositional bias: basic and acidic residues. A phosphoserine mark is found at serine 529 and serine 545. The span at 588–612 (SSESPSVFSSLSSPIAAPISTSTPI) shows a compositional bias: low complexity. Over residues 637–652 (QTESLTPVPNSGSSAL) the composition is skewed to polar residues. Residues 698–715 (ETGRQEEELPRFPCKKQD) are compositionally biased toward basic and acidic residues. Serine 758 carries the phosphoserine modification. Positions 855–866 (ESPHAEDSERES) are enriched in basic and acidic residues. Acidic residues predominate over residues 975–986 (VEDDGDQVEDDG). Residues 1037–1048 (ASVTAPSEQTTE) are compositionally biased toward polar residues. Residues 1116-1131 (SDTHHTSTAESQKKAT) show a composition bias toward basic and acidic residues. Serine 1135 bears the Phosphoserine mark. In terms of domain architecture, FIP-RBD spans 1211–1273 (KKYSPSDPAF…EETPNILRIP (63 aa)). The necessary for interaction with RAB4A and RAB11A, subcellular location and endosomal recycling stretch occupies residues 1219-1283 (AFAYAQLTHD…TQVGKKAGKM (65 aa)).

In terms of assembly, interacts with RAB11A (GTP-bound form); the interaction induces RAB11FIP1 recruitment to membranes. Interacts with RAB14 (GTP-bound form). Homooligomer. Isoform 2 interacts with RAB4A, RAB11A, RAB11B and RAB25. According to PubMed:15280022, RAB4A binding to RAB11FIP1 is of very low affinity in vitro and in vivo. In terms of tissue distribution, isoform 2 is expressed in brain, heart, testis, lung, spleen, ovary and small intestine.

The protein resides in the recycling endosome. The protein localises to the cytoplasmic vesicle. It is found in the phagosome membrane. Its function is as follows. A Rab11 effector protein involved in the endosomal recycling process. Also involved in controlling membrane trafficking along the phagocytic pathway and in phagocytosis. Interaction with RAB14 may function in the process of neurite formation. The chain is Rab11 family-interacting protein 1 from Homo sapiens (Human).